The chain runs to 426 residues: Glutamate-1-semialdehyde 2,1-aminomutase (426 aa).

Lysine 265 bears the N6-(pyridoxal phosphate)lysine mark.

Belongs to the class-III pyridoxal-phosphate-dependent aminotransferase family. HemL subfamily. As to quaternary structure, homodimer. It depends on pyridoxal 5'-phosphate as a cofactor.

It localises to the cytoplasm. The enzyme catalyses (S)-4-amino-5-oxopentanoate = 5-aminolevulinate. It participates in porphyrin-containing compound metabolism; protoporphyrin-IX biosynthesis; 5-aminolevulinate from L-glutamyl-tRNA(Glu): step 2/2. The chain is Glutamate-1-semialdehyde 2,1-aminomutase from Cronobacter sakazakii (strain ATCC BAA-894) (Enterobacter sakazakii).